Consider the following 358-residue polypeptide: Protein UL24 (358 aa).

It belongs to the herpesviridae US22 family.

The protein localises to the virion tegument. This chain is Protein UL24 (UL24), found in Homo sapiens (Human).